The sequence spans 270 residues: Acyl-[acyl-carrier-protein]--UDP-N-acetylglucosamine O-acyltransferase (270 aa).

It belongs to the transferase hexapeptide repeat family. LpxA subfamily. Homotrimer.

It localises to the cytoplasm. It catalyses the reaction a (3R)-hydroxyacyl-[ACP] + UDP-N-acetyl-alpha-D-glucosamine = a UDP-3-O-[(3R)-3-hydroxyacyl]-N-acetyl-alpha-D-glucosamine + holo-[ACP]. It participates in glycolipid biosynthesis; lipid IV(A) biosynthesis; lipid IV(A) from (3R)-3-hydroxytetradecanoyl-[acyl-carrier-protein] and UDP-N-acetyl-alpha-D-glucosamine: step 1/6. In terms of biological role, involved in the biosynthesis of lipid A, a phosphorylated glycolipid that anchors the lipopolysaccharide to the outer membrane of the cell. This chain is Acyl-[acyl-carrier-protein]--UDP-N-acetylglucosamine O-acyltransferase, found in Bartonella tribocorum (strain CIP 105476 / IBS 506).